We begin with the raw amino-acid sequence, 160 residues long: Transcriptional regulator MraZ (160 aa).

SpoVT-AbrB domains are found at residues 5–51 (TFEK…GKAL) and 80–123 (MAKL…EREA).

This sequence belongs to the MraZ family. In terms of assembly, forms oligomers.

The protein resides in the cytoplasm. It localises to the nucleoid. The sequence is that of Transcriptional regulator MraZ from Phenylobacterium zucineum (strain HLK1).